The chain runs to 202 residues: ATP-dependent Clp protease proteolytic subunit (202 aa).

Ser101 (nucleophile) is an active-site residue. The active site involves His126.

This sequence belongs to the peptidase S14 family. Component of the chloroplastic Clp protease core complex.

Its subcellular location is the plastid. It localises to the chloroplast stroma. The enzyme catalyses Hydrolysis of proteins to small peptides in the presence of ATP and magnesium. alpha-casein is the usual test substrate. In the absence of ATP, only oligopeptides shorter than five residues are hydrolyzed (such as succinyl-Leu-Tyr-|-NHMec, and Leu-Tyr-Leu-|-Tyr-Trp, in which cleavage of the -Tyr-|-Leu- and -Tyr-|-Trp bonds also occurs).. Its function is as follows. Cleaves peptides in various proteins in a process that requires ATP hydrolysis. Has a chymotrypsin-like activity. Plays a major role in the degradation of misfolded proteins. This Platanus occidentalis (Sycamore) protein is ATP-dependent Clp protease proteolytic subunit.